Consider the following 1292-residue polypeptide: Calcium-transporting ATPase 2 (1292 aa).

The interval 1 to 105 (MPTYNDDDDS…EQASSKSSTS (105 aa)) is disordered. At 1 to 236 (MPTYNDDDDS…RLMLEAFKDK (236 aa)) the chain is on the cytoplasmic side. Over residues 23–41 (KPSSSQFLGVPSSNYNQRE) the composition is skewed to polar residues. Low complexity predominate over residues 44 to 60 (SRSGSSTISREPSSSGT). Positions 68 to 78 (DSMKESYDKNK) are enriched in basic and acidic residues. A helical transmembrane segment spans residues 237–257 (VLILLSIAAVVSLALGLYQTF). Residues 258 to 273 (GQPPTLDPITGKPEPR) are Vacuolar-facing. Residues 274 to 294 (VEWVEGVAIMAAIVIVVTVGG) form a helical membrane-spanning segment. The Cytoplasmic portion of the chain corresponds to 295 to 448 (VNDWQKELQF…QLRLSRVADA (154 aa)). The chain crosses the membrane as a helical span at residues 449–469 (IAKLGGAASALLFIVLLIEFL). The Vacuolar portion of the chain corresponds to 470–488 (VRLKSNDSSSKNKGQEFLQ). A helical membrane pass occupies residues 489-509 (ILIVSVTLLVVAVPEGLPLAV). Val-498 and Glu-503 together coordinate Ca(2+). Topologically, residues 510 to 938 (TLALAFATNR…GRTVNDAVKK (429 aa)) are cytoplasmic. Asp-545 acts as the 4-aspartylphosphate intermediate in catalysis. The Mg(2+) site is built by Asp-545 and Thr-547. ATP contacts are provided by residues Thr-547, Glu-638, Lys-691, Arg-736, 807–809 (TGD), Arg-856, and Lys-862. Mg(2+) is bound at residue Asp-881. Asn-884 lines the ATP pocket. Residues 939–959 (FLQFQITVNITAVFLTIISAV) traverse the membrane as a helical segment. Asn-947 contributes to the Ca(2+) binding site. Over 960–966 (ASTDQSS) the chain is Vacuolar. The chain crosses the membrane as a helical span at residues 967–987 (VLTAVQLLWVNLIMDTLAALA). 2 residues coordinate Ca(2+): Asn-977 and Asp-981. Topologically, residues 988–1016 (LATDPPTPEVLKRKPEKPGASLFTFDMWK) are cytoplasmic. A helical membrane pass occupies residues 1017–1037 (MIICQSMYQLAVTLVLHFAGN). Over 1038–1084 (SIFHYPSNTADMNTIVFNTFVWLQLFNEINNRRLDNKLNIFERINHN) the chain is Vacuolar. Residues 1085–1105 (FLFIAIFVIVAGIQVIIVFFG) form a helical membrane-spanning segment. Topologically, residues 1106-1115 (GAAFSVKRID) are cytoplasmic. Residues 1116 to 1136 (GKGWAISIVFGVISIPLGALI) traverse the membrane as a helical segment. Residues 1137-1292 (RCVPNNFLRK…ALDKKSSNVH (156 aa)) lie on the Vacuolar side of the membrane.

It belongs to the cation transport ATPase (P-type) (TC 3.A.3) family.

It is found in the vacuole membrane. It catalyses the reaction Ca(2+)(in) + ATP + H2O = Ca(2+)(out) + ADP + phosphate + H(+). This magnesium-dependent enzyme catalyzes the hydrolysis of ATP coupled with the transport of calcium. Transports the calcium to the vacuole and participates in the control of the cytosolic free calcium. This is Calcium-transporting ATPase 2 (pmc1) from Schizosaccharomyces pombe (strain 972 / ATCC 24843) (Fission yeast).